A 747-amino-acid polypeptide reads, in one-letter code: Endoglucanase C (747 aa).

Residues 1–37 form the signal peptide; that stretch reads MGHVTSPSKRYPASFKRAGSILGVSIALAAFSNVAAA. Residues 38 to 136 enclose the CBM2 domain; it reads GCEYVVTNSW…TVNGAACTGG (99 aa). 3 disulfides stabilise this stretch: C39–C133, C183–C214, and C193–C208. The 30-residue stretch at 182 to 211 folds into the CBM10 domain; sequence QCNWYGTLYPLCVSTTSGWGYENNRSCISP. The tract at residues 226–283 is disordered; that stretch reads GSSSPSSISSSSVRSSSSSSVVPPSSSSSSSVPSSSSSSVSSSSVVSSSSSSVSVPGT. The span at 227-281 shows a compositional bias: low complexity; it reads SSSPSSISSSSVRSSSSSSVVPPSSSSSSSVPSSSSSSVSSSSVVSSSSSSVSVP. Residues 280–747 are catalytic; sequence VPGTGVFRVN…TQLLHNMWGL (468 aa). Catalysis depends on E502, which acts as the Proton donor. E652 (nucleophile) is an active-site residue.

The protein belongs to the glycosyl hydrolase 5 (cellulase A) family.

The catalysed reaction is Endohydrolysis of (1-&gt;4)-beta-D-glucosidic linkages in cellulose, lichenin and cereal beta-D-glucans.. The polypeptide is Endoglucanase C (celC) (Cellvibrio japonicus (strain Ueda107) (Pseudomonas fluorescens subsp. cellulosa)).